We begin with the raw amino-acid sequence, 478 residues long: D(1B) dopamine receptor (478 aa).

Topologically, residues 1 to 38 (MLPPGRNGTAHRARLGLQRQLAQVDAPGGSAAPLGPAQ) are extracellular. N-linked (GlcNAc...) asparagine glycosylation is present at asparagine 7. Residues 39 to 64 (VVTAGLLTLLIVWTLLGNVLVCAAIV) form a helical membrane-spanning segment. Residues 65-75 (RSRHLRAKMTN) are Cytoplasmic-facing. A helical transmembrane segment spans residues 76 to 102 (IFIVSLAVSDLFVALLVMPWKAVAEVA). The Extracellular portion of the chain corresponds to 103 to 111 (GYWPFGAFC). Residues cysteine 111 and cysteine 211 are joined by a disulfide bond. The helical transmembrane segment at 112-134 (DIWVAFDIMCSTASILNLCIISV) threads the bilayer. Over 135–153 (DRYWAISRPFRYERKMTQR) the chain is Cytoplasmic. The chain crosses the membrane as a helical span at residues 154–179 (VALVMVALAWTLSILISFIPVQLNWH). Residues 180-215 (RDKAGSQGREGLLSNETPWEEGWELDGRTENCDSSL) are Extracellular-facing. Residues 216-240 (NRTYAISSSLISFYIPVAIMIVTYT) form a helical membrane-spanning segment. Residues 241 to 289 (RIYRIAQVQIRRISSLERAAEHAQSCRSRGACEPDPSLRASIKKETKVF) lie on the Cytoplasmic side of the membrane. The chain crosses the membrane as a helical span at residues 290–317 (KTLSVIMGVFVCCWLPFFILNCMVPFCS). At 318-335 (SGDAQGPRTGFPCVSETT) the chain is on the extracellular side. The chain crosses the membrane as a helical span at residues 336–357 (FDIFVWFGWANSSLNPIIYAFN). Residues 358 to 478 (ADFRKVFAQL…LTPNCFHKTA (121 aa)) lie on the Cytoplasmic side of the membrane. The S-palmitoyl cysteine moiety is linked to residue cysteine 370. A disordered region spans residues 416–446 (GDREVGEEEEAEEEGPFDHMSQISPTTPDGD). The span at 420–430 (VGEEEEAEEEG) shows a compositional bias: acidic residues.

This sequence belongs to the G-protein coupled receptor 1 family.

The protein localises to the cell membrane. Dopamine receptor whose activity is mediated by G proteins which activate adenylyl cyclase. In Mus musculus (Mouse), this protein is D(1B) dopamine receptor (Drd5).